Here is a 423-residue protein sequence, read N- to C-terminus: Serine incorporator 5 (423 aa).

The Extracellular segment spans residues 1–36; it reads MSAQCCAGQLACCCGSAGCSLCCDCCPRIRQSLSTR. A helical transmembrane segment spans residues 37–57; the sequence is FMYALYFILVVVLCCIMMSTT. The Cytoplasmic portion of the chain corresponds to 58 to 89; it reads VAHKMKEHIPFFEDMCKGIKAGDTCEKLVGYS. Residues 90–110 form a helical membrane-spanning segment; sequence AVYRVCFGMACFFFIFCLLTL. Residues 111–124 lie on the Extracellular side of the membrane; sequence KINNSKSCRAHIHN. N-linked (GlcNAc...) asparagine glycosylation is present at Asn-113. A helical membrane pass occupies residues 125-145; that stretch reads GFWFFKLLLLGAMCSGAFFIP. Topologically, residues 146-156 are cytoplasmic; it reads DQDTFLNAWRY. A helical membrane pass occupies residues 157 to 177; it reads VGAVGGFLFIGIQLLLLVEFA. Residues 178 to 198 lie on the Extracellular side of the membrane; the sequence is HKWNKNWTAGTASNKLWYASL. Asn-183 is a glycosylation site (N-linked (GlcNAc...) asparagine). Residues 199–219 form a helical membrane-spanning segment; that stretch reads ALVTLIMYSIATGGLVLMAVF. The Cytoplasmic portion of the chain corresponds to 220-230; that stretch reads YTQKDSCMENK. The helical transmembrane segment at 231-251 threads the bilayer; it reads ILLGVNGGLCLLISLVAISPW. Residues 252 to 258 lie on the Extracellular side of the membrane; that stretch reads VQNRQPH. Residues 259–279 traverse the membrane as a helical segment; it reads SGLLQSGVISCYVTYLTFSAL. The Cytoplasmic portion of the chain corresponds to 280–311; the sequence is SSKPAEVVLDEHGKNVTICVPDFGQDLYRDEN. Residues 312–332 form a helical membrane-spanning segment; it reads LVTILGTSLLIGCILYSCLTS. The Extracellular segment spans residues 333–385; that stretch reads TTRSSSDALQGRYAAPELEIARCCFCFSPGGEDTEEQQPGKEGPRVIYDEKKG. Residues 386 to 406 traverse the membrane as a helical segment; sequence TVYIYSYFHFVFFLASLYVMM. Topologically, residues 407 to 423 are cytoplasmic; that stretch reads TVTNWFNHVRSAFHLLP.

Belongs to the TDE1 family. In terms of tissue distribution, highly expressed in placenta, skeletal muscle, spleen, thymus, testis and peripheral leukocyte and is expressed weakly in the heart, liver and fetal brain.

It is found in the cell membrane. Its subcellular location is the cytoplasm. It localises to the perinuclear region. The catalysed reaction is a 1,2-diacyl-sn-glycero-3-phospho-L-serine(in) = a 1,2-diacyl-sn-glycero-3-phospho-L-serine(out). It carries out the reaction a 1,2-diacyl-sn-glycero-3-phosphocholine(in) = a 1,2-diacyl-sn-glycero-3-phosphocholine(out). The enzyme catalyses a 1,2-diacyl-sn-glycero-3-phosphoethanolamine(in) = a 1,2-diacyl-sn-glycero-3-phosphoethanolamine(out). Restriction factor required to restrict infectivity of lentiviruses, such as HIV-1: acts by inhibiting an early step of viral infection. Impairs the penetration of the viral particle into the cytoplasm. Non-ATP-dependent, non-specific lipid transporter for phosphatidylserine, phosphatidylcholine, and phosphatidylethanolamine. Functions as a scramblase that flips lipids in both directions across the membrane. Phospholipid scrambling results in HIV-1 surface exposure of phosphatidylserine and loss of membrane asymmetry, which leads to changes in HIV-1 Env conformation and loss of infectivity. Enhances the incorporation of serine into phosphatidylserine and sphingolipids. May play a role in providing serine molecules for the formation of myelin glycosphingolipids in oligodendrocytes. The chain is Serine incorporator 5 from Homo sapiens (Human).